Here is a 1943-residue protein sequence, read N- to C-terminus: Cadherin-86C (1943 aa).

Residues 1-102 form a disordered region; sequence MASTSSSQPE…QNQQMQHHWP (102 aa). Topologically, residues 1–934 are extracellular; it reads MASTSSSQPE…TDTQYKAENK (934 aa). Asn-12 carries an N-linked (GlcNAc...) asparagine glycan. Positions 50-89 are enriched in basic residues; sequence PHHHHHHHHQHHHHHRLKQHHRHHHHHHRLQHHHHHHQQQ. Positions 90–100 are enriched in low complexity; sequence HNHQNQQMQHH. 5 consecutive Cadherin domains span residues 238–366, 367–483, 484–600, 601–708, and 709–832; these read CSIT…PPVF, TSAP…PPYF, ENDH…APVF, EQPA…TPIF, and DKDL…SVKF. N-linked (GlcNAc...) asparagine glycans are attached at residues Asn-244, Asn-419, Asn-531, Asn-579, Asn-585, Asn-612, and Asn-645. Residue Asn-912 is glycosylated (N-linked (GlcNAc...) asparagine). Residues 935–955 traverse the membrane as a helical segment; it reads VLFWLLILLATLVALTILILL. At 956–1943 the chain is on the cytoplasmic side; that stretch reads LCCICSWCPL…NSGGESPQYS (988 aa). Disordered stretches follow at residues 1038–1058, 1390–1442, 1458–1516, 1546–1695, and 1707–1895; these read DVGR…SAEE, KPSR…RKRI, EEEE…SHNR, YKHS…ERNV, and KSSV…DDHD. The span at 1047–1058 shows a compositional bias: basic and acidic residues; it reads EGDRRHIQSAEE. Over residues 1426 to 1442 the composition is skewed to basic residues; it reads IKRRRTKKRPRQPRKRI. Composition is skewed to basic and acidic residues over residues 1486-1497 and 1507-1516; these read QLSDESRKDQSR and HRSESDSHNR. Acidic residues predominate over residues 1552-1568; it reads DFDEDDTEYSIDSDGDE. Basic and acidic residues predominate over residues 1580 to 1602; the sequence is QENERYRRQERTYAEPENPVDRK. Residues 1633–1667 show a composition bias toward polar residues; the sequence is KQTSSEPPHNRVSISKYESTVTENGRKLMSTSTEI. Residues 1709 to 1724 show a composition bias toward low complexity; the sequence is SVSGRTSTESSKSQPS. 4 stretches are compositionally biased toward basic and acidic residues: residues 1754-1764, 1774-1793, 1800-1810, and 1837-1863; these read TGGRYKPEPAP, LLKE…ETDT, HSEHRFERENA, and KESK…ENEV. Polar residues predominate over residues 1879 to 1889; sequence HPTQKQLNAST.

As cell intercalation proceeds, a row of stigmatophore cells surrounding the spiracular chamber show expression of Cad86C. Expression is regulated by the Abd-B cascade, requiring sal. Expressed in a broad region of the morphogenetic furrow and in clusters of cells posterior to the morphogenetic furrow. Weakly expressed in the epithelium of wing imaginal disks. In eye imaginal disk cells within the morphogenetic furrow, expression is localized to the apical region.

It localises to the cell membrane. Cadherins are calcium-dependent cell adhesion proteins. They preferentially interact with themselves in a homophilic manner in connecting cells. In Drosophila melanogaster (Fruit fly), this protein is Cadherin-86C (Cad86C).